We begin with the raw amino-acid sequence, 401 residues long: Acetate kinase (401 aa).

Asn-7 is a binding site for Mg(2+). Lys-14 is a binding site for ATP. Arg-91 is a binding site for substrate. Asp-148 serves as the catalytic Proton donor/acceptor. Residues 208 to 212 (HLGNG), 283 to 285 (DFR), and 331 to 335 (GVGEN) contribute to the ATP site. Mg(2+) is bound at residue Glu-384.

Belongs to the acetokinase family. As to quaternary structure, homodimer. The cofactor is Mg(2+). Requires Mn(2+) as cofactor.

It localises to the cytoplasm. The enzyme catalyses acetate + ATP = acetyl phosphate + ADP. The protein operates within metabolic intermediate biosynthesis; acetyl-CoA biosynthesis; acetyl-CoA from acetate: step 1/2. Catalyzes the formation of acetyl phosphate from acetate and ATP. Can also catalyze the reverse reaction. The polypeptide is Acetate kinase (Helicobacter hepaticus (strain ATCC 51449 / 3B1)).